The following is a 129-amino-acid chain: uncharacterized protein (129 aa).

It belongs to the asfivirus C129R family.

The protein resides in the virion. Plays a role in the inhibition of type I interferon signaling pathway. Mechanistically, specifically interacts with 2',3'-cGAMP and cleaves it via its phosphodiesterase activity. In turn, prevents 2',3'-cGAMP interaction with host ER-resident STING1 leading to inhibition of downstream signaling pathway and type I interferon production. This is an uncharacterized protein from African swine fever virus (isolate Pig/Kenya/KEN-50/1950) (ASFV).